A 273-amino-acid chain; its full sequence is 3-methyl-2-oxobutanoate hydroxymethyltransferase (273 aa).

Mg(2+)-binding residues include aspartate 49 and aspartate 88. 3-methyl-2-oxobutanoate is bound by residues aspartate 49–serine 50, aspartate 88, and lysine 118. Glutamate 120 contacts Mg(2+). Glutamate 187 (proton acceptor) is an active-site residue.

Belongs to the PanB family. As to quaternary structure, homodecamer; pentamer of dimers. It depends on Mg(2+) as a cofactor.

It localises to the cytoplasm. It catalyses the reaction 3-methyl-2-oxobutanoate + (6R)-5,10-methylene-5,6,7,8-tetrahydrofolate + H2O = 2-dehydropantoate + (6S)-5,6,7,8-tetrahydrofolate. It participates in cofactor biosynthesis; (R)-pantothenate biosynthesis; (R)-pantoate from 3-methyl-2-oxobutanoate: step 1/2. In terms of biological role, catalyzes the reversible reaction in which hydroxymethyl group from 5,10-methylenetetrahydrofolate is transferred onto alpha-ketoisovalerate to form ketopantoate. This is 3-methyl-2-oxobutanoate hydroxymethyltransferase from Sinorhizobium medicae (strain WSM419) (Ensifer medicae).